The primary structure comprises 481 residues: GTPase Obg (481 aa).

The Obg domain occupies 2–159; it reads TTFVDRVVLH…LDAVLELKSV (158 aa). One can recognise an OBG-type G domain in the interval 160–330; it reads ADIGLVGYPS…LMFAMGELVA (171 aa). GTP is bound by residues 166–173, 191–195, 212–215, 282–285, and 311–313; these read GYPSAGKS, FTTLV, DVPG, NKID, and SAA. Residues Ser173 and Thr193 each coordinate Mg(2+). Residues 348-426 enclose the OCT domain; that stretch reads PKAVDDAGFT…IGEREFDWHP (79 aa). The tract at residues 440–481 is disordered; the sequence is DQRLAEKTQRPSAAERLAARKARRQRPGDEPESDELDGDSGE. Over residues 469-481 the composition is skewed to acidic residues; that stretch reads EPESDELDGDSGE.

The protein belongs to the TRAFAC class OBG-HflX-like GTPase superfamily. OBG GTPase family. In terms of assembly, monomer. Mg(2+) is required as a cofactor.

The protein localises to the cytoplasm. Its function is as follows. An essential GTPase which binds GTP, GDP and possibly (p)ppGpp with moderate affinity, with high nucleotide exchange rates and a fairly low GTP hydrolysis rate. Plays a role in control of the cell cycle, stress response, ribosome biogenesis and in those bacteria that undergo differentiation, in morphogenesis control. This Salinispora arenicola (strain CNS-205) protein is GTPase Obg.